The sequence spans 732 residues: MDTSGHFHDSGVGDLDEDPKCPCPSSGDEQQQQQQPPPPPAPPAVPQQPPGPLLQPQPPQPQQQQSQQQQQQQSQQQQQQAPLHPLPQLAQLQSQLVHPGLLHSSPTAFRAPTSANSTAILHPSSRQGSQLNLNDHLLGHSPSSTATSGPGGGSRHRQASPLVHRRDSNPFTEIAMSSCKYSGGVMKPLSRLSASRRNLIEAEPEGQPLQLFSPSNPPEIIISSREDNHAHQTLLHHPNATHNHQHAGTTAGSTTFPKANKRKNQNIGYKLGHRRALFEKRKRLSDYALIFGMFGIVVMVIETELSWGLYSKDSMFSLALKCLISLSTVILLGLIIAYHTREVQLFVIDNGADDWRIAMTYERILYISLEMLVCAIHPIPGEYKFFWTARLAFSYTPSRAEADVDIILSIPMFLRLYLIARVMLLHSKLFTDASSRSIGALNKINFNTRFVMKTLMTICPGTVLLVFSISLWIIAAWTVRVCERYHDQQDVTSNFLGAMWLISITFLSIGYGDMVPHTYCGKGVCLLTGIMGAGCTALVVAVVARKLELTKAEKHVHNFMMDTQLTKRIKNAAANVLRETWLIYKHTKLLKKIDHAKVRKHQRKFLQAIHQLRGVKMEQRKLSDQANTLVDLSKMQNVMYDLITELNDRSEDLEKQIGSLESKLEHLTASFNSLPLLIADTLRQQQQQLLTAFVEARGISVAVGTSHAPPSDSPIGISSTSFPTPYTSSSSC.

The segment covering 1–11 (MDTSGHFHDSG) has biased composition (basic and acidic residues). 2 disordered regions span residues 1-82 (MDTS…QQAP) and 119-161 (AILH…QASP). Positions 35 to 61 (QPPPPPAPPAVPQQPPGPLLQPQPPQP) are enriched in pro residues. Low complexity predominate over residues 62–82 (QQQQSQQQQQQQSQQQQQQAP). Over residues 119-133 (AILHPSSRQGSQLNL) the composition is skewed to polar residues. The segment covering 139-148 (GHSPSSTATS) has biased composition (low complexity). A Phosphoserine modification is found at serine 168. Residues 241-257 (THNHQHAGTTAGSTTFP) are compositionally biased toward polar residues. The tract at residues 241–260 (THNHQHAGTTAGSTTFPKAN) is disordered. A helical transmembrane segment spans residues 289–309 (LIFGMFGIVVMVIETELSWGL). Residues 316–336 (FSLALKCLISLSTVILLGLII) form a helical membrane-spanning segment. Residues 367 to 387 (ISLEMLVCAIHPIPGEYKFFW) traverse the membrane as a helical segment. The helical transmembrane segment at 406-426 (IILSIPMFLRLYLIARVMLLH) threads the bilayer. Residues 455-475 (LMTICPGTVLLVFSISLWIIA) traverse the membrane as a helical segment. The segment at residues 495 to 515 (FLGAMWLISITFLSIGYGDMV) is an intramembrane region (pore-forming). Residues 524 to 544 (VCLLTGIMGAGCTALVVAVVA) traverse the membrane as a helical segment. The segment at 562 to 638 (DTQLTKRIKN…LVDLSKMQNV (77 aa)) is calmodulin-binding. Residues 643–670 (ITELNDRSEDLEKQIGSLESKLEHLTAS) adopt a coiled-coil conformation. The disordered stretch occupies residues 704–732 (GTSHAPPSDSPIGISSTSFPTPYTSSSSC). The segment covering 718–732 (SSTSFPTPYTSSSSC) has biased composition (low complexity).

This sequence belongs to the potassium channel KCNN family. KCa2.3/KCNN3 subfamily. Homodimer. Heteromultimer with KCNN2 or KCNN1; this modulates plasma membrane expression and consequently the small conductance calcium-activated potassium channel activity. The complex is composed of 4 channel subunits each of which binds to a calmodulin subunit which regulates the channel activity through calcium-binding. Interacts with CALM1. Expressed at low levels in atrial and ventricular myocytes (at protein level).

The protein localises to the cell membrane. The protein resides in the cytoplasm. It is found in the myofibril. Its subcellular location is the sarcomere. It localises to the z line. It catalyses the reaction K(+)(in) = K(+)(out). Inhibited by bee venom neurotoxin apamin. In terms of biological role, small conductance calcium-activated potassium channel that mediates the voltage-independent transmembrane transfer of potassium across the cell membrane through a constitutive interaction with calmodulin which binds the intracellular calcium allowing its opening. The current is characterized by a voltage-independent activation, an intracellular calcium concentration increase-dependent activation and a single-channel conductance of 10 picosiemens. Also presents an inwardly rectifying current, thus reducing its already small outward conductance of potassium ions, which is particularly the case when the membrane potential displays positive values, above + 20 mV. Activation is followed by membrane hyperpolarization. Thought to regulate neuronal excitability by contributing to the slow component of synaptic afterhyperpolarization. The polypeptide is Small conductance calcium-activated potassium channel protein 3 (Mus musculus (Mouse)).